We begin with the raw amino-acid sequence, 130 residues long: Small ribosomal subunit protein uS9 (130 aa).

The protein belongs to the universal ribosomal protein uS9 family.

The chain is Small ribosomal subunit protein uS9 from Mycoplasmoides gallisepticum (strain R(low / passage 15 / clone 2)) (Mycoplasma gallisepticum).